Here is a 245-residue protein sequence, read N- to C-terminus: Thiopurine S-methyltransferase (245 aa).

29 to 40 (WQDKWVSHKIGF) contributes to the S-adenosyl-L-methionine binding site. Phe-40 provides a ligand contact to substrate. Residue Lys-58 is modified to N6-acetyllysine. Residues Leu-69, Glu-90, 134–135 (SI), and Arg-152 each bind S-adenosyl-L-methionine.

This sequence belongs to the class I-like SAM-binding methyltransferase superfamily. TPMT family. In terms of assembly, monomer.

The protein localises to the cytoplasm. The enzyme catalyses S-adenosyl-L-methionine + a thiopurine = S-adenosyl-L-homocysteine + a thiopurine S-methylether.. The protein is Thiopurine S-methyltransferase (TPMT) of Oryctolagus cuniculus (Rabbit).